Reading from the N-terminus, the 211-residue chain is ATP phosphoribosyltransferase (211 aa).

It belongs to the ATP phosphoribosyltransferase family. Short subfamily. In terms of assembly, heteromultimer composed of HisG and HisZ subunits.

The protein resides in the cytoplasm. The enzyme catalyses 1-(5-phospho-beta-D-ribosyl)-ATP + diphosphate = 5-phospho-alpha-D-ribose 1-diphosphate + ATP. The protein operates within amino-acid biosynthesis; L-histidine biosynthesis; L-histidine from 5-phospho-alpha-D-ribose 1-diphosphate: step 1/9. Catalyzes the condensation of ATP and 5-phosphoribose 1-diphosphate to form N'-(5'-phosphoribosyl)-ATP (PR-ATP). Has a crucial role in the pathway because the rate of histidine biosynthesis seems to be controlled primarily by regulation of HisG enzymatic activity. In Bacillus cereus (strain B4264), this protein is ATP phosphoribosyltransferase.